A 131-amino-acid chain; its full sequence is Histone H2A-beta (131 aa).

S2 is modified (N-acetylserine). N6-acetyllysine is present on residues K5 and K9. An N5-methylglutamine modification is found at Q106. S128 bears the Phosphoserine mark. The [ST]-Q motif motif lies at 128 to 129 (SQ).

It belongs to the histone H2A family. As to quaternary structure, the nucleosome is a histone octamer containing two molecules each of H2A, H2B, H3 and H4 assembled in one H3-H4 heterotetramer and two H2A-H2B heterodimers. The octamer wraps approximately 147 bp of DNA. Phosphorylated to form H2AS128ph (gamma-H2A) in response to DNA double-strand breaks (DSBs) generated by exogenous genotoxic agents and by stalled replication forks. Phosphorylation is dependent on the DNA damage checkpoint kinases rad3/ATR and tel1/ATM, spreads on either side of a detected DSB site and may mark the surrounding chromatin for recruitment of proteins required for DNA damage signaling and repair. Gamma-H2A is required for recruiting crb2, a modulator of DNA damage checkpoint signaling, to DSB sites. Gamma-H2A is removed from the DNA prior to the strand invasion-primer extension step of the repair process and subsequently dephosphorylated. Dephosphorylation is necessary for efficient recovery from the DNA damage checkpoint. In terms of processing, acetylated by esa1 to form H2AK4ac and H2AK7ac.

It localises to the nucleus. The protein localises to the chromosome. Core component of nucleosome which plays a central role in DNA double strand break (DSB) repair. Nucleosomes wrap and compact DNA into chromatin, limiting DNA accessibility to the cellular machineries which require DNA as a template. Histones thereby play a central role in transcription regulation, DNA repair, DNA replication and chromosomal stability. DNA accessibility is regulated via a complex set of post-translational modifications of histones, also called histone code, and nucleosome remodeling. The protein is Histone H2A-beta (hta2) of Schizosaccharomyces pombe (strain 972 / ATCC 24843) (Fission yeast).